Here is a 541-residue protein sequence, read N- to C-terminus: Eukaryotic translation initiation factor 3 subunit L (541 aa).

The region spanning 308 to 516 (TFSDILLYIQ…IHIADTKVSH (209 aa)) is the PCI domain.

Belongs to the eIF-3 subunit L family. In terms of assembly, component of the eukaryotic translation initiation factor 3 (eIF-3) complex. The eIF-3 complex interacts with pix.

It localises to the cytoplasm. In terms of biological role, component of the eukaryotic translation initiation factor 3 (eIF-3) complex, which is involved in protein synthesis of a specialized repertoire of mRNAs and, together with other initiation factors, stimulates binding of mRNA and methionyl-tRNAi to the 40S ribosome. The eIF-3 complex specifically targets and initiates translation of a subset of mRNAs involved in cell proliferation. This chain is Eukaryotic translation initiation factor 3 subunit L, found in Drosophila persimilis (Fruit fly).